Reading from the N-terminus, the 455-residue chain is T-box protein VegT-B (455 aa).

Residues 57 to 230 constitute a DNA-binding region (T-box); sequence LWTQFHQEGT…HNPFAKGFRE (174 aa). Residues 229–241 show a composition bias toward basic and acidic residues; sequence REQERSHKRDDVL. Disordered stretches follow at residues 229-276 and 295-350; these read REQE…RIKE and ANQG…RRLT. The segment covering 308-326 has biased composition (polar residues); the sequence is GVNQEQQVPTSSSNFYIKS.

In terms of assembly, forms a repression complex on the promoters of the nodal/nr1 and siamois genes with the maternal factors tcf7l1/tcf3 and pouf5.1/oct-25. Interacts (via C-terminus) with tcf7l1/tcf3 (via N-terminus). Also interacts with the other POU-domain transcription factors pou5f1.2/oct-91 and pou5f1.3/oct-60. As to expression, maternally localized to the vegetal hemisphere of oocytes. Zygotic expression parallels blastopore formation and shifts from dorsal expression in the marginal zone of late blastula and early gastrula stages to a ventral/lateral expression at later stages. During neurula and tailbud stages, expressed in the posterior and anterior ends of the embryo. During tailbud stages, expressed in a subset of interneurons in the neural tube.

The protein resides in the nucleus. Functionally, transcription factor required for both mesoderm and endoderm formation in the embryo; signaling determinants and concentration levels may determine which germ layer is formed. Acts together with beta-catenin to activate genes that are responsible for mesoderm induction including wnt-8, eomes t/bra, siamois, mix1 and sox17. Directly binds to promoter DNA. Patterns the mesoderm along the dorsoventral and posterior axis. Activates siamois gene transcription when alone or in combination with beta-catenin, but inhibits siamois transcription in combination with pou5f1.1/oct-25. This chain is T-box protein VegT-B (vegt-b), found in Xenopus laevis (African clawed frog).